The sequence spans 123 residues: Large ribosomal subunit protein bL12 (123 aa).

This sequence belongs to the bacterial ribosomal protein bL12 family. Homodimer. Part of the ribosomal stalk of the 50S ribosomal subunit. Forms a multimeric L10(L12)X complex, where L10 forms an elongated spine to which 2 to 4 L12 dimers bind in a sequential fashion. Binds GTP-bound translation factors.

Forms part of the ribosomal stalk which helps the ribosome interact with GTP-bound translation factors. Is thus essential for accurate translation. The chain is Large ribosomal subunit protein bL12 from Acholeplasma laidlawii (strain PG-8A).